The following is a 377-amino-acid chain: Chaperone protein DnaJ (377 aa).

The 66-residue stretch at Asp-5–Gly-70 folds into the J domain. The CR-type zinc finger occupies Gly-133 to Thr-211. Cys-146, Cys-149, Cys-163, Cys-166, Cys-185, Cys-188, Cys-199, and Cys-202 together coordinate Zn(2+). CXXCXGXG motif repeat units follow at residues Cys-146–Gly-153, Cys-163–Gly-170, Cys-185–Gly-192, and Cys-199–Gly-206.

Belongs to the DnaJ family. As to quaternary structure, homodimer. It depends on Zn(2+) as a cofactor.

The protein resides in the cytoplasm. Participates actively in the response to hyperosmotic and heat shock by preventing the aggregation of stress-denatured proteins and by disaggregating proteins, also in an autonomous, DnaK-independent fashion. Unfolded proteins bind initially to DnaJ; upon interaction with the DnaJ-bound protein, DnaK hydrolyzes its bound ATP, resulting in the formation of a stable complex. GrpE releases ADP from DnaK; ATP binding to DnaK triggers the release of the substrate protein, thus completing the reaction cycle. Several rounds of ATP-dependent interactions between DnaJ, DnaK and GrpE are required for fully efficient folding. Also involved, together with DnaK and GrpE, in the DNA replication of plasmids through activation of initiation proteins. The polypeptide is Chaperone protein DnaJ (Shewanella sp. (strain ANA-3)).